Here is a 417-residue protein sequence, read N- to C-terminus: Sulfite reductase, dissimilatory-type subunit alpha (417 aa).

8 residues coordinate [4Fe-4S] cluster: cysteine 170, cysteine 176, cysteine 214, cysteine 218, cysteine 264, cysteine 284, cysteine 287, and cysteine 290. Siroheme is bound at residue cysteine 218.

[4Fe-4S] cluster serves as cofactor. It depends on siroheme as a cofactor.

It carries out the reaction [DsrC protein]-trisulfide + NAD(+) + 3 H2O = [DsrC protein]-dithiol + sulfite + NADH + 3 H(+). Functionally, catalyzes the reduction of sulfite to sulfide. This is the terminal oxidation reaction in sulfate respiration. In Allochromatium vinosum (strain ATCC 17899 / DSM 180 / NBRC 103801 / NCIMB 10441 / D) (Chromatium vinosum), this protein is Sulfite reductase, dissimilatory-type subunit alpha (dsrA).